The primary structure comprises 353 residues: Guanidino acid hydrolase, mitochondrial (353 aa).

The transit peptide at 1–33 (MLQLLKSSWVRSAGSGVVTWRASAGLFCPGTRQ) directs the protein to the mitochondrion. The segment at 29–52 (PGTRQASDTSDTLHHPSPSSESQV) is disordered. Positions 163 and 188 each coordinate Mn(2+). N6-acetyllysine is present on lysine 194. Position 218 is an N6-acetyllysine; alternate (lysine 218). N6-succinyllysine; alternate is present on lysine 218. Mn(2+) is bound at residue aspartate 279.

The protein belongs to the arginase family. Agmatinase subfamily. It depends on Mn(2+) as a cofactor.

The protein localises to the mitochondrion. It catalyses the reaction 3-guanidinopropanoate + H2O = urea + beta-alanine. It carries out the reaction 4-guanidinobutanoate + H2O = urea + 4-aminobutanoate. The enzyme catalyses taurocyamine + H2O = urea + taurine. The catalysed reaction is L-arginine + H2O = urea + L-ornithine. It participates in nitrogen metabolism; urea cycle; L-ornithine and urea from L-arginine: step 1/1. Functionally, hydrolyzes linear guanidino acids to form urea and the corresponding amines. Displays specificity for substrates having a negatively charged head group and short chains including taurocyamine, guanidino propanoic and butanoic acids. May protect cells by detoxifying potentially harmful amounts of guanidino acids. Metabolizes L-arginine with low efficiency. The chain is Guanidino acid hydrolase, mitochondrial (Agmat) from Rattus norvegicus (Rat).